The sequence spans 381 residues: Chaperone protein DnaJ (381 aa).

Residues 5-73 form the J domain; it reads DYYEVLGVGK…EKKAAYDQYG (69 aa). The CR-type zinc-finger motif lies at 141-219; it reads GHEAQIRVPH…CHGQGKLKSQ (79 aa). Zn(2+) is bound by residues C154, C157, C171, C174, C193, C196, C207, and C210. CXXCXGXG motif repeat units follow at residues 154–161, 171–178, 193–200, and 207–214; these read CDHCHGNG, CPTCHGAG, CPKCHGSG, and CTKCHGQG. The segment at 357-381 is disordered; it reads SVHEGGSRHSPQEQSWLDKVKSFFS.

This sequence belongs to the DnaJ family. In terms of assembly, homodimer. Zn(2+) is required as a cofactor.

It is found in the cytoplasm. Functionally, participates actively in the response to hyperosmotic and heat shock by preventing the aggregation of stress-denatured proteins and by disaggregating proteins, also in an autonomous, DnaK-independent fashion. Unfolded proteins bind initially to DnaJ; upon interaction with the DnaJ-bound protein, DnaK hydrolyzes its bound ATP, resulting in the formation of a stable complex. GrpE releases ADP from DnaK; ATP binding to DnaK triggers the release of the substrate protein, thus completing the reaction cycle. Several rounds of ATP-dependent interactions between DnaJ, DnaK and GrpE are required for fully efficient folding. Also involved, together with DnaK and GrpE, in the DNA replication of plasmids through activation of initiation proteins. This chain is Chaperone protein DnaJ, found in Cupriavidus necator (strain ATCC 17699 / DSM 428 / KCTC 22496 / NCIMB 10442 / H16 / Stanier 337) (Ralstonia eutropha).